Consider the following 495-residue polypeptide: UDP-N-acetylmuramoyl-L-alanyl-D-glutamate--2,6-diaminopimelate ligase (495 aa).

UDP-N-acetyl-alpha-D-muramoyl-L-alanyl-D-glutamate contacts are provided by residues leucine 27, serine 29, and histidine 44–alanine 46. Residue glycine 116–threonine 122 coordinates ATP. UDP-N-acetyl-alpha-D-muramoyl-L-alanyl-D-glutamate is bound by residues asparagine 157, threonine 158–threonine 159, serine 185, glutamine 191, and arginine 193. N6-carboxylysine is present on lysine 225. Meso-2,6-diaminopimelate is bound by residues arginine 390, aspartate 414 to arginine 417, glycine 465, and glutamate 469. The short motif at aspartate 414–arginine 417 is the Meso-diaminopimelate recognition motif element.

The protein belongs to the MurCDEF family. MurE subfamily. Requires Mg(2+) as cofactor. In terms of processing, carboxylation is probably crucial for Mg(2+) binding and, consequently, for the gamma-phosphate positioning of ATP.

It is found in the cytoplasm. The enzyme catalyses UDP-N-acetyl-alpha-D-muramoyl-L-alanyl-D-glutamate + meso-2,6-diaminopimelate + ATP = UDP-N-acetyl-alpha-D-muramoyl-L-alanyl-gamma-D-glutamyl-meso-2,6-diaminopimelate + ADP + phosphate + H(+). It functions in the pathway cell wall biogenesis; peptidoglycan biosynthesis. Functionally, catalyzes the addition of meso-diaminopimelic acid to the nucleotide precursor UDP-N-acetylmuramoyl-L-alanyl-D-glutamate (UMAG) in the biosynthesis of bacterial cell-wall peptidoglycan. In Enterobacter sp. (strain 638), this protein is UDP-N-acetylmuramoyl-L-alanyl-D-glutamate--2,6-diaminopimelate ligase.